Reading from the N-terminus, the 309-residue chain is Elongation factor Ts, mitochondrial (309 aa).

Belongs to the EF-Ts family.

The protein resides in the mitochondrion. Functionally, associates with the EF-Tu.GDP complex and induces the exchange of GDP to GTP. It remains bound to the aminoacyl-tRNA.EF-Tu.GTP complex up to the GTP hydrolysis stage on the ribosome. This chain is Elongation factor Ts, mitochondrial (tsfm), found in Salmo salar (Atlantic salmon).